Here is a 230-residue protein sequence, read N- to C-terminus: uncharacterized protein (230 aa).

This is an uncharacterized protein from Acanthamoeba polyphaga (Amoeba).